A 490-amino-acid chain; its full sequence is Adenylosuccinate lyase (490 aa).

Alanine 2 carries the post-translational modification N-acetylalanine. Residues 26-27 (RY), 91-93 (RHD), and 117-118 (TS) contribute to the substrate site. Residue lysine 153 is modified to N6-acetyllysine. The active-site Proton donor/acceptor is histidine 165. Glutamine 247 is a binding site for substrate. Residue serine 295 is the Proton donor/acceptor of the active site. Lysine 301 carries the post-translational modification N6-acetyllysine. Substrate-binding residues include arginine 309, arginine 335, serine 340, and arginine 344. A Glycyl lysine isopeptide (Lys-Gly) (interchain with G-Cter in SUMO1) cross-link involves residue lysine 421.

Belongs to the lyase 1 family. Adenylosuccinate lyase subfamily. Homotetramer. Residues from neighboring subunits contribute catalytic and substrate-binding residues to each active site.

The enzyme catalyses N(6)-(1,2-dicarboxyethyl)-AMP = fumarate + AMP. It carries out the reaction (2S)-2-[5-amino-1-(5-phospho-beta-D-ribosyl)imidazole-4-carboxamido]succinate = 5-amino-1-(5-phospho-beta-D-ribosyl)imidazole-4-carboxamide + fumarate. The protein operates within purine metabolism; AMP biosynthesis via de novo pathway; AMP from IMP: step 2/2. Its pathway is purine metabolism; IMP biosynthesis via de novo pathway; 5-amino-1-(5-phospho-D-ribosyl)imidazole-4-carboxamide from 5-amino-1-(5-phospho-D-ribosyl)imidazole-4-carboxylate: step 2/2. Catalyzes two non-sequential steps in de novo AMP synthesis: converts (S)-2-(5-amino-1-(5-phospho-D-ribosyl)imidazole-4-carboxamido)succinate (SAICAR) to fumarate plus 5-amino-1-(5-phospho-D-ribosyl)imidazole-4-carboxamide, and thereby also contributes to de novo IMP synthesis, and converts succinyladenosine monophosphate (SAMP) to AMP and fumarate. The sequence is that of Adenylosuccinate lyase (ADSL) from Bos taurus (Bovine).